A 425-amino-acid polypeptide reads, in one-letter code: Glyco-Gag protein (425 aa).

Residues 1 to 54 (MSRASSGTATGARLFGISSVLGEYRVLIGDEGAGPSRSPSEVSFSVWYRSRAAR) lie on the Cytoplasmic side of the membrane. Residues 55 to 75 (LVIVCLVASFLVPCLTFLIAE) form a helical membrane-spanning segment. Residues 76-425 (TVMGQTITTP…VVQGKEETPA (350 aa)) are Extracellular-facing. An N-linked (GlcNAc...) asparagine; by host glycan is attached at asparagine 137. The disordered stretch occupies residues 174–285 (VRPFLPPPKP…LREGPNNRPQ (112 aa)). Pro residues predominate over residues 177–196 (FLPPPKPPTSLPQPLSPQPS). Low complexity predominate over residues 197–209 (APLTSSLYPVLPK). Pro residues-rich tracts occupy residues 213–223 (PKPPVLPPDPS) and 233–248 (EPPP…PSGP).

Post-translationally, glycosylated by host. Cleaved by host near the middle of the molecule, releasing the c-terminal half containing capsid and nucleoprotein domains op GAG.

It is found in the host cell membrane. In terms of biological role, plays a role in viral particle release. Presumably acts by facilitating the fission of the virion bud at the cell surface. In Felidae (cat family), this protein is Glyco-Gag protein.